A 622-amino-acid chain; its full sequence is DNA topoisomerase 3 (622 aa).

In terms of domain architecture, Toprim spans 2-148; it reads RVLCVAEKNS…SIQVIRADFN (147 aa). The 431-residue stretch at 166–596 folds into the Topo IA-type catalytic domain; the sequence is SKNAADAVDA…MILTQFRDVF (431 aa). Tyr330 (O-(5'-phospho-DNA)-tyrosine intermediate) is an active-site residue.

Belongs to the type IA topoisomerase family. In terms of assembly, interacts with hus2.

The catalysed reaction is ATP-independent breakage of single-stranded DNA, followed by passage and rejoining.. Its function is as follows. Releases the supercoiling and torsional tension of DNA introduced during the DNA replication and transcription by transiently cleaving and rejoining one strand of the DNA duplex. Introduces a single-strand break via transesterification at a target site in duplex DNA. The scissile phosphodiester is attacked by the catalytic tyrosine of the enzyme, resulting in the formation of a DNA-(5'-phosphotyrosyl)-enzyme intermediate and the expulsion of a 3'-OH DNA strand. The free DNA strand than undergoes passage around the unbroken strand thus removing DNA supercoils. Finally, in the religation step, the DNA 3'-OH attacks the covalent intermediate to expel the active-site tyrosine and restore the DNA phosphodiester backbone. The sequence is that of DNA topoisomerase 3 (top3) from Schizosaccharomyces pombe (strain 972 / ATCC 24843) (Fission yeast).